The primary structure comprises 363 residues: Flagellar P-ring protein (363 aa).

A signal peptide spans 1 to 20 (MKLKLILAVAMLAFSLPSQA).

It belongs to the FlgI family. As to quaternary structure, the basal body constitutes a major portion of the flagellar organelle and consists of four rings (L,P,S, and M) mounted on a central rod.

It localises to the periplasm. It is found in the bacterial flagellum basal body. In terms of biological role, assembles around the rod to form the L-ring and probably protects the motor/basal body from shearing forces during rotation. This is Flagellar P-ring protein from Shewanella sp. (strain MR-4).